Consider the following 280-residue polypeptide: Tryptophan synthase alpha chain (280 aa).

Residues glutamate 49 and aspartate 60 each act as proton acceptor in the active site.

This sequence belongs to the TrpA family. As to quaternary structure, tetramer of two alpha and two beta chains.

The enzyme catalyses (1S,2R)-1-C-(indol-3-yl)glycerol 3-phosphate + L-serine = D-glyceraldehyde 3-phosphate + L-tryptophan + H2O. Its pathway is amino-acid biosynthesis; L-tryptophan biosynthesis; L-tryptophan from chorismate: step 5/5. Its function is as follows. The alpha subunit is responsible for the aldol cleavage of indoleglycerol phosphate to indole and glyceraldehyde 3-phosphate. This is Tryptophan synthase alpha chain from Corynebacterium glutamicum (strain ATCC 13032 / DSM 20300 / JCM 1318 / BCRC 11384 / CCUG 27702 / LMG 3730 / NBRC 12168 / NCIMB 10025 / NRRL B-2784 / 534).